Reading from the N-terminus, the 255-residue chain is Propionicin-F (255 aa).

2 consecutive propeptides follow at residues methionine 1–cysteine 101 and glycine 145–valine 255.

The protein localises to the secreted. Functionally, bacteriocin with specific antibacterial activity against strains of P.freudenreichii. No antibacterial activity was detected against P.acidipropionici, P.jensenii and P.thoenii. The chain is Propionicin-F from Propionibacterium freudenreichii subsp. freudenreichii.